A 398-amino-acid polypeptide reads, in one-letter code: MAKLTVKDVDLKGKKVLVRVDFNVPLKDGVITNDNRITAALPTIKYIIEQGGRAILFSHLGRVKEEADKAGKSLAPVAADLAAKLGQDVVFPGVTRGAELEAAINALEDGQVLLVENTRYEDVDGKKESKNDPELGKYWASLGDGIFVNDAFGTAHRAHASNVGISANVEKAVAGFLLENEIAYIQEAVETPERPFVAILGGSKVSDKIGVIENLLEKADKVLIGGGMTYTFYKAQGIEIGNSLVEEDKLDVAKALLEKANGKLILPVDSKEANAFAGYTEVRDTEGEAVSEGFLGLDIGPKSIAKFDEALTGAKTVVWNGPMGVFENPDFQAGTIGVMDAIVKQPGVKSIIGGGDSAAAAINLGRADKFSWISTGGGASMELLEGKVLPGLAALTEK.

Residues 21 to 23 (DFN), arginine 36, 59 to 62 (HLGR), arginine 119, and arginine 157 each bind substrate. ATP contacts are provided by residues lysine 208, glycine 296, glutamate 327, and 354–357 (GGDS).

This sequence belongs to the phosphoglycerate kinase family. Monomer.

The protein localises to the cytoplasm. It catalyses the reaction (2R)-3-phosphoglycerate + ATP = (2R)-3-phospho-glyceroyl phosphate + ADP. It participates in carbohydrate degradation; glycolysis; pyruvate from D-glyceraldehyde 3-phosphate: step 2/5. The chain is Phosphoglycerate kinase from Streptococcus pneumoniae (strain Taiwan19F-14).